Reading from the N-terminus, the 276-residue chain is Large ribosomal subunit protein uL2 (276 aa).

The segment at 224–276 is disordered; it reads VMNPVDHPHGGGEGKAPIGRKSPMTPWGKPTLGFKTRKKKNKSDKFIIRRRKK. The segment covering 258-276 has biased composition (basic residues); that stretch reads KTRKKKNKSDKFIIRRRKK.

It belongs to the universal ribosomal protein uL2 family. In terms of assembly, part of the 50S ribosomal subunit. Forms a bridge to the 30S subunit in the 70S ribosome.

One of the primary rRNA binding proteins. Required for association of the 30S and 50S subunits to form the 70S ribosome, for tRNA binding and peptide bond formation. It has been suggested to have peptidyltransferase activity; this is somewhat controversial. Makes several contacts with the 16S rRNA in the 70S ribosome. In Geobacillus sp. (strain WCH70), this protein is Large ribosomal subunit protein uL2.